The chain runs to 348 residues: Uroporphyrinogen decarboxylase (348 aa).

Substrate is bound by residues 28–32, Asp78, Tyr154, Thr209, and His325; that span reads RQAGR.

It belongs to the uroporphyrinogen decarboxylase family. As to quaternary structure, homodimer.

It is found in the cytoplasm. It catalyses the reaction uroporphyrinogen III + 4 H(+) = coproporphyrinogen III + 4 CO2. It functions in the pathway porphyrin-containing compound metabolism; protoporphyrin-IX biosynthesis; coproporphyrinogen-III from 5-aminolevulinate: step 4/4. Catalyzes the decarboxylation of four acetate groups of uroporphyrinogen-III to yield coproporphyrinogen-III. This chain is Uroporphyrinogen decarboxylase, found in Rhodopseudomonas palustris (strain HaA2).